A 125-amino-acid chain; its full sequence is Large ribosomal subunit protein bL19 (125 aa).

The protein belongs to the bacterial ribosomal protein bL19 family.

In terms of biological role, this protein is located at the 30S-50S ribosomal subunit interface and may play a role in the structure and function of the aminoacyl-tRNA binding site. The polypeptide is Large ribosomal subunit protein bL19 (Ehrlichia ruminantium (strain Welgevonden)).